A 91-amino-acid polypeptide reads, in one-letter code: Ice-structuring protein (91 aa).

Positions M1 to T21 are cleaved as a signal peptide. A propeptide spans E22–D39 (removed by a dipeptidylpeptidase).

This sequence belongs to the type-I AFP family.

It localises to the secreted. Functionally, contributes to protect fish blood from freezing at subzero sea water temperatures. Lowers the blood freezing point. Binds to nascent ice crystals and prevents further growth. The polypeptide is Ice-structuring protein (Pseudopleuronectes americanus (Winter flounder)).